The chain runs to 965 residues: Vacuolar membrane protease (965 aa).

Residues 1 to 16 (MARPSLSPSNPLGFTP) are Cytoplasmic-facing. Residues 17–37 (WPVTVITAVVYLALVVPLLVV) form a helical membrane-spanning segment. Residues 38-387 (HHVVPSAPSS…SAFVVFELHT (350 aa)) are Vacuolar-facing. N-linked (GlcNAc...) asparagine glycosylation is found at Asn53 and Asn119. His171 and Asp183 together coordinate Zn(2+). Catalysis depends on Glu217, which acts as the Proton acceptor. Positions 218, 243, and 316 each coordinate Zn(2+). The chain crosses the membrane as a helical span at residues 388–408 (LFALSVTLLVVAPLVLLVTSI). At 409 to 441 (ALARADKMYLFRSSASPEDSDGSEVVPLHGVRG) the chain is on the cytoplasmic side. Residues 442-462 (FFRFPFLLVIPTAVTVGLAYL) traverse the membrane as a helical segment. Topologically, residues 463–472 (VTKFNPYIIH) are vacuolar. Residues 473-493 (SSEYAVWSMMISAWVFLAWFV) traverse the membrane as a helical segment. Over 494-507 (SRVADFARPSAFHR) the chain is Cytoplasmic. The chain crosses the membrane as a helical span at residues 508 to 528 (VYTLTWLFLVEWVFLVISTVY). Over 529–532 (ENQY) the chain is Vacuolar. A helical transmembrane segment spans residues 533 to 553 (GLAGGYFVLFVFAGTFLATWI). Residues 554–661 (SYLELFALPR…WSIHLPKWVW (108 aa)) are Cytoplasmic-facing. The disordered stretch occupies residues 577–610 (RTSSHGSRLGTASGEDVEDGEDEDDDGTTAEATE). The span at 591–604 (EDVEDGEDEDDDGT) shows a compositional bias: acidic residues. The helical transmembrane segment at 662–682 (VLQFLLTAPLVLIFVGPLALL) threads the bilayer. Residues 683–698 (LTSALRQTGQDGSPSL) are Vacuolar-facing. Residues 699–719 (FIYIAVAALTTLLFIPLLPFI) traverse the membrane as a helical segment. The Cytoplasmic portion of the chain corresponds to 720-725 (HRYTHH). The helical transmembrane segment at 726–746 (IPLFLLCVFAGTLIYNLVAFP) threads the bilayer. The Vacuolar segment spans residues 747–965 (FSPANRLKLF…LVEGSRRFEV (219 aa)). N-linked (GlcNAc...) asparagine glycans are attached at residues Asn793 and Asn830.

This sequence belongs to the peptidase M28 family. The cofactor is Zn(2+).

It is found in the vacuole membrane. May be involved in vacuolar sorting and osmoregulation. This chain is Vacuolar membrane protease, found in Aspergillus fumigatus (strain CBS 144.89 / FGSC A1163 / CEA10) (Neosartorya fumigata).